We begin with the raw amino-acid sequence, 162 residues long: Ribose-5-phosphate isomerase B (162 aa).

D-ribulose 5-phosphate is bound by residues 11-12 (DH) and 70-74 (GSGNG). The active-site Proton acceptor is E75. The Proton donor role is filled by H102. Residues N103, R113, R137, and R141 each contribute to the D-ribulose 5-phosphate site.

It belongs to the LacAB/RpiB family. Homodimer.

It carries out the reaction aldehydo-D-ribose 5-phosphate = D-ribulose 5-phosphate. The protein operates within carbohydrate degradation; pentose phosphate pathway; D-ribose 5-phosphate from D-ribulose 5-phosphate (non-oxidative stage): step 1/1. In terms of biological role, catalyzes the interconversion of ribulose-5-P and ribose-5-P. In Mycobacterium bovis (strain ATCC BAA-935 / AF2122/97), this protein is Ribose-5-phosphate isomerase B.